The sequence spans 340 residues: Dihydroorotate dehydrogenase (quinone) (340 aa).

Residues 65–69 (AGADK) and Thr-89 contribute to the FMN site. Residue Lys-69 coordinates substrate. 114 to 118 (NRNGF) lines the substrate pocket. 2 residues coordinate FMN: Asn-142 and Asn-175. Substrate is bound at residue Asn-175. The Nucleophile role is filled by Ser-178. A substrate-binding site is contributed by Asn-180. FMN is bound by residues Lys-220 and Thr-248. Residue 249 to 250 (NT) participates in substrate binding. Residues Gly-271, Gly-300, and 321-322 (YS) each bind FMN.

Belongs to the dihydroorotate dehydrogenase family. Type 2 subfamily. As to quaternary structure, monomer. Requires FMN as cofactor.

The protein localises to the cell membrane. It catalyses the reaction (S)-dihydroorotate + a quinone = orotate + a quinol. The protein operates within pyrimidine metabolism; UMP biosynthesis via de novo pathway; orotate from (S)-dihydroorotate (quinone route): step 1/1. Functionally, catalyzes the conversion of dihydroorotate to orotate with quinone as electron acceptor. The polypeptide is Dihydroorotate dehydrogenase (quinone) (Mannheimia succiniciproducens (strain KCTC 0769BP / MBEL55E)).